The primary structure comprises 105 residues: Platelet factor 4 (105 aa).

The signal sequence occupies residues 1–29 (MSVAAVFRGLRPSPELLLLGLLFLPAVVA). Residue threonine 31 is glycosylated (O-linked (GalNAc...) threonine). Intrachain disulfides connect cysteine 44/cysteine 71 and cysteine 46/cysteine 87. Phosphoserine is present on serine 61. 96 to 102 (KKVIKKI) provides a ligand contact to heparin.

It belongs to the intercrine alpha (chemokine CxC) family. Homotetramer. Interacts with TNFAIP6 (via Link domain). Interacts with CCR1. Interacts with CXCR3. Interacts with THBD; this interaction enhances generation of activated protein C.

The protein resides in the secreted. Its function is as follows. Chemokine released during platelet aggregation that plays a role in different biological processes including hematopoiesis, cell proliferation, differentiation, and activation. Acts via different functional receptors including CCR1, CXCR3A or CXCR3B. Upon interaction with CXCR3A receptor, induces activated T-lymphocytes migration mediated via downstream Ras/extracellular signal-regulated kinase (ERK) signaling. Neutralizes the anticoagulant effect of heparin by binding more strongly to heparin than to the chondroitin-4-sulfate chains of the carrier molecule. Plays a role in the inhibition of hematopoiesis and in the maintenance of hematopoietic stem cell (HSC) quiescence. Chemotactic for neutrophils and monocytes via CCR1. Inhibits endothelial cell proliferation. In cooperation with toll-like receptor 8/TLR8, induces chromatin remodeling and activates inflammatory gene expression via the TBK1-IRF5 axis. In addition, induces myofibroblast differentiation and collagen synthesis in different precursor cells, including endothelial cells, by stimulating endothelial-to-mesenchymal transition. Interacts with thrombomodulin/THBD to enhance the activation of protein C and thus potentiates its anticoagulant activity. The chain is Platelet factor 4 (Pf4) from Mus musculus (Mouse).